Reading from the N-terminus, the 329-residue chain is Mas-related G-protein coupled receptor member X2 (329 aa).

The Extracellular portion of the chain corresponds to 1–33; sequence MDPTTPAWGTESTTMNGNDQALPLLCGKETMIS. A helical transmembrane segment spans residues 34 to 54; the sequence is VFLILFIALVGLVGNAFVLWL. The Cytoplasmic segment spans residues 55-63; the sequence is LGFRMRRNA. A helical membrane pass occupies residues 64–84; the sequence is FSVYVLSLAGADFLFLCFQMT. At 85–96 the chain is on the extracellular side; sequence SCLAYLINFFGS. Residues 97-116 traverse the membrane as a helical segment; that stretch reads ISINIPSFFTVMTCAYLAGL. Residues 117–143 are Cytoplasmic-facing; the sequence is SMLSAISTERCLSVLWPIWYRCRRPRH. Residues 144–164 traverse the membrane as a helical segment; that stretch reads LSAVMCVLLWALSLLLSILEG. At 165–183 the chain is on the extracellular side; the sequence is KFCGFLFSDDDPGWCQTFD. Residues 184–204 form a helical membrane-spanning segment; the sequence is FITAAWLMFLFVVLCGSSLAL. Residues 205–227 are Cytoplasmic-facing; the sequence is LVRILCGSRSLPLTRLYLTILLT. The chain crosses the membrane as a helical span at residues 228–248; that stretch reads VLIFLLCGLPFGIQWFLILWI. The Extracellular segment spans residues 249 to 263; it reads WKNSVVLFCHIHPIS. A helical membrane pass occupies residues 264 to 284; it reads VVLSSFNSSANPIIYFFVGSF. Residues 285–329 are Cytoplasmic-facing; that stretch reads RKQWRLRQPILKLALQRALQDTAEVDHSEGCFSQGTLEMSRSSLV.

Belongs to the G-protein coupled receptor 1 family. Mas subfamily.

It localises to the cell membrane. Its function is as follows. Mast cell-specific receptor for basic secretagogues, i.e. cationic amphiphilic drugs, as well as endo- or exogenous peptides, consisting of a basic head group and a hydrophobic core. Recognizes and binds small molecules containing a cyclized tetrahydroisoquinoline (THIQ), such as non-steroidal neuromuscular blocking drugs (NMBDs), including tubocurarine and atracurium. In response to these compounds, mediates pseudo-allergic reactions characterized by histamine release, inflammation and airway contraction. This Macaca mulatta (Rhesus macaque) protein is Mas-related G-protein coupled receptor member X2 (MRGPRX2).